The primary structure comprises 324 residues: MIRLRSAAARDRCQVLSLAYRITVAGRCQTVSPHHRQAKVSEQPSLAKEIAITSTDATADTPRTSPPSDTAGTTSRHRGFGIDIGGSSIKGGIVDLDIGQLIGDRIKLLTPQPATPLAVAKTIAEVVNAFGWTAPLGVTYPGVVTQGVVRTAANVDDSWIGTNARDIISAELNSQEVTILNDADAAGLAEGRYGAGKNNSGLIVLLTFGTGIGSAVIHNGKLIPNTEFGHLEVDGKEAEQRAASSVKDKYKWSYRTWAKQVTRVLVAIENAMCPDLFIAGGGISRKADRWIPLLENRTPMVAAALQNTAGIVGAAMASTADVTH.

The tract at residues 53 to 79 (TSTDATADTPRTSPPSDTAGTTSRHRG) is disordered. The span at 62 to 74 (PRTSPPSDTAGTT) shows a compositional bias: polar residues. Position 83 to 88 (83 to 88 (DIGGSS)) interacts with ATP.

This sequence belongs to the ROK (NagC/XylR) family. In terms of assembly, homodimer.

It catalyses the reaction [phosphate](n) + D-glucose = [phosphate](n-1) + D-glucose 6-phosphate + H(+). It carries out the reaction D-glucose + ATP = D-glucose 6-phosphate + ADP + H(+). In terms of biological role, catalyzes the phosphorylation of glucose using polyphosphate or ATP as the phosphoryl donor. In Mycobacterium leprae (strain TN), this protein is Polyphosphate glucokinase (ppgK).